The following is a 130-amino-acid chain: Small ribosomal subunit protein uS9 (130 aa).

It belongs to the universal ribosomal protein uS9 family.

The sequence is that of Small ribosomal subunit protein uS9 (rpsI) from Haemophilus influenzae (strain ATCC 51907 / DSM 11121 / KW20 / Rd).